The chain runs to 354 residues: Methylthioribose-1-phosphate isomerase (354 aa).

D246 functions as the Proton donor in the catalytic mechanism.

This sequence belongs to the eIF-2B alpha/beta/delta subunits family. MtnA subfamily.

It is found in the cytoplasm. Its subcellular location is the nucleus. The catalysed reaction is 5-(methylsulfanyl)-alpha-D-ribose 1-phosphate = 5-(methylsulfanyl)-D-ribulose 1-phosphate. It functions in the pathway amino-acid biosynthesis; L-methionine biosynthesis via salvage pathway; L-methionine from S-methyl-5-thio-alpha-D-ribose 1-phosphate: step 1/6. Its function is as follows. Catalyzes the interconversion of methylthioribose-1-phosphate (MTR-1-P) into methylthioribulose-1-phosphate (MTRu-1-P). In Xenopus laevis (African clawed frog), this protein is Methylthioribose-1-phosphate isomerase (mri1).